A 201-amino-acid chain; its full sequence is Fas apoptotic inhibitory molecule 1 (201 aa).

This sequence belongs to the FAIM1 family.

It localises to the cytoplasm. In terms of biological role, plays a role as an inducible effector molecule that mediates Fas resistance produced by surface Ig engagement in B cells. The polypeptide is Fas apoptotic inhibitory molecule 1 (FAIM) (Bos taurus (Bovine)).